We begin with the raw amino-acid sequence, 92 residues long: Large ribosomal subunit protein eL43 (92 aa).

Residues cysteine 39, cysteine 42, cysteine 57, and cysteine 60 each coordinate Zn(2+). A C4-type zinc finger spans residues 39 to 60 (CSFCGKTKMKRRAVGIWHCGSC).

It belongs to the eukaryotic ribosomal protein eL43 family. Component of the large ribosomal subunit.

Its subcellular location is the cytoplasm. Functionally, component of the large ribosomal subunit. The ribosome is a large ribonucleoprotein complex responsible for the synthesis of proteins in the cell. The chain is Large ribosomal subunit protein eL43 (rpl37a) from Ictalurus punctatus (Channel catfish).